A 309-amino-acid polypeptide reads, in one-letter code: MNSPDIALIKTYLLTLQDNICGALAQADGHAEFTEECWVREEGGGGRSRVLVNGAVFEQAGVNFSHVSGAMLPASATAHRPELAGRSFQALGVSLVIHPLNPYLPTSHANVRFFIAEKPGEDAVWWFGGGFDLTPYYGFEEDAIHWHQVAHSLCQPFGEQIYPRYKKWCDDYFYIKHRQEARGIGGLFFDDLNSPDFMTCFNFTQAVGDGFLAAYMPIVARRKALGWGDRERQFQLYRRGRYVEFNLVWDRGTLFGLQTGGRTESILMSLPPLVRWEYNYQPEADSAEAALYRDFLPVKDWLAIKGETH.

Ser94 is a binding site for substrate. His98 and His108 together coordinate a divalent metal cation. The active-site Proton donor is the His108. A substrate-binding site is contributed by 110 to 112 (NVR). Residues His147 and His177 each coordinate a divalent metal cation. The segment at 242 to 277 (YVEFNLVWDRGTLFGLQTGGRTESILMSLPPLVRWE) is important for dimerization. Position 260-262 (260-262 (GGR)) interacts with substrate.

The protein belongs to the aerobic coproporphyrinogen-III oxidase family. As to quaternary structure, homodimer. The cofactor is a divalent metal cation.

It is found in the cytoplasm. It carries out the reaction coproporphyrinogen III + O2 + 2 H(+) = protoporphyrinogen IX + 2 CO2 + 2 H2O. It participates in porphyrin-containing compound metabolism; protoporphyrin-IX biosynthesis; protoporphyrinogen-IX from coproporphyrinogen-III (O2 route): step 1/1. Functionally, involved in the heme biosynthesis. Catalyzes the aerobic oxidative decarboxylation of propionate groups of rings A and B of coproporphyrinogen-III to yield the vinyl groups in protoporphyrinogen-IX. The sequence is that of Oxygen-dependent coproporphyrinogen-III oxidase from Yersinia pseudotuberculosis serotype O:1b (strain IP 31758).